The primary structure comprises 402 residues: Nicotinate phosphoribosyltransferase (402 aa).

The residue at position 224 (histidine 224) is a Phosphohistidine; by autocatalysis.

Belongs to the NAPRTase family. Post-translationally, transiently phosphorylated on a His residue during the reaction cycle. Phosphorylation strongly increases the affinity for substrates and increases the rate of nicotinate D-ribonucleotide production. Dephosphorylation regenerates the low-affinity form of the enzyme, leading to product release.

It carries out the reaction nicotinate + 5-phospho-alpha-D-ribose 1-diphosphate + ATP + H2O = nicotinate beta-D-ribonucleotide + ADP + phosphate + diphosphate. It participates in cofactor biosynthesis; NAD(+) biosynthesis; nicotinate D-ribonucleotide from nicotinate: step 1/1. Functionally, catalyzes the synthesis of beta-nicotinate D-ribonucleotide from nicotinate and 5-phospho-D-ribose 1-phosphate at the expense of ATP. The protein is Nicotinate phosphoribosyltransferase of Neisseria meningitidis serogroup B (strain ATCC BAA-335 / MC58).